We begin with the raw amino-acid sequence, 954 residues long: Glycine dehydrogenase (decarboxylating) (954 aa).

Lys-704 is subject to N6-(pyridoxal phosphate)lysine.

It belongs to the GcvP family. As to quaternary structure, the glycine cleavage system is composed of four proteins: P, T, L and H. Requires pyridoxal 5'-phosphate as cofactor.

It catalyses the reaction N(6)-[(R)-lipoyl]-L-lysyl-[glycine-cleavage complex H protein] + glycine + H(+) = N(6)-[(R)-S(8)-aminomethyldihydrolipoyl]-L-lysyl-[glycine-cleavage complex H protein] + CO2. In terms of biological role, the glycine cleavage system catalyzes the degradation of glycine. The P protein binds the alpha-amino group of glycine through its pyridoxal phosphate cofactor; CO(2) is released and the remaining methylamine moiety is then transferred to the lipoamide cofactor of the H protein. This Sinorhizobium medicae (strain WSM419) (Ensifer medicae) protein is Glycine dehydrogenase (decarboxylating).